Reading from the N-terminus, the 278-residue chain is Gamma carbonic anhydrase 2, mitochondrial (278 aa).

Residues 1–43 (MGTLGRAIYTVGNWIRGTGQALDRVGSLLQGSHRIEEHLSRHR) constitute a mitochondrion transit peptide. Residues 86 to 88 (RGD) and 101 to 102 (QD) contribute to the substrate site. The Zn(2+) site is built by His107, His130, and His135. Substrate is bound at residue Asn209.

Belongs to the gamma-class carbonic anhydrase family. In terms of assembly, homotrimer. Component of the mitochondrial oxidoreductase respiratory chain complex I; element of the extra matrix-exposed domain, which is attached to the membrane arm of this complex. Interacts with GAMMACAL1 and GAMMACAL2. Zn(2+) is required as a cofactor. Constitutively expressed in roots and leaves, with higher levels in flowers, particularly in tapetal tissue of anthers, inflorescence (IM) and floral meristems (FM).

Its subcellular location is the mitochondrion membrane. Enzyme involved in the catabolism of H(2)CO(3) but that does not mediates the reversible hydration of carbon dioxide. Mediates complex I assembly in mitochondria and respiration. Binds HCO(3)-. Required for male fertility during anther development and dehiscence to regulate the secondary thickenings of the endothecial cell wall, probably by modulating H(2)O(2)-dependent lignin polymerization. The polypeptide is Gamma carbonic anhydrase 2, mitochondrial (GAMMACA2) (Arabidopsis thaliana (Mouse-ear cress)).